The following is a 496-amino-acid chain: Lysine--tRNA ligase (496 aa).

Glutamate 403 and glutamate 410 together coordinate Mg(2+).

Belongs to the class-II aminoacyl-tRNA synthetase family. As to quaternary structure, homodimer. The cofactor is Mg(2+).

The protein localises to the cytoplasm. It catalyses the reaction tRNA(Lys) + L-lysine + ATP = L-lysyl-tRNA(Lys) + AMP + diphosphate. The polypeptide is Lysine--tRNA ligase (Aster yellows witches'-broom phytoplasma (strain AYWB)).